A 359-amino-acid chain; its full sequence is Phospho-N-acetylmuramoyl-pentapeptide-transferase (359 aa).

A run of 10 helical transmembrane segments spans residues Q3–I23, V55–L75, G84–I104, T120–A140, I156–A176, L187–F207, L231–A251, I255–T275, I280–I300, and F334–L354.

The protein belongs to the glycosyltransferase 4 family. MraY subfamily. Requires Mg(2+) as cofactor.

It is found in the cell membrane. It catalyses the reaction UDP-N-acetyl-alpha-D-muramoyl-L-alanyl-gamma-D-glutamyl-meso-2,6-diaminopimeloyl-D-alanyl-D-alanine + di-trans,octa-cis-undecaprenyl phosphate = di-trans,octa-cis-undecaprenyl diphospho-N-acetyl-alpha-D-muramoyl-L-alanyl-D-glutamyl-meso-2,6-diaminopimeloyl-D-alanyl-D-alanine + UMP. Its pathway is cell wall biogenesis; peptidoglycan biosynthesis. Its function is as follows. Catalyzes the initial step of the lipid cycle reactions in the biosynthesis of the cell wall peptidoglycan: transfers peptidoglycan precursor phospho-MurNAc-pentapeptide from UDP-MurNAc-pentapeptide onto the lipid carrier undecaprenyl phosphate, yielding undecaprenyl-pyrophosphoryl-MurNAc-pentapeptide, known as lipid I. This is Phospho-N-acetylmuramoyl-pentapeptide-transferase from Mycobacterium sp. (strain MCS).